A 356-amino-acid polypeptide reads, in one-letter code: tRNA N6-adenosine threonylcarbamoyltransferase (356 aa).

Positions 122, 126, and 143 each coordinate a divalent metal cation. Substrate is bound by residues Y143–G147, D175, G190, E194, and N287. Position 315 (D315) interacts with a divalent metal cation.

Belongs to the KAE1 / TsaD family. As to quaternary structure, component of the EKC/KEOPS complex composed of at least BUD32, CGI121, GON7, KAE1 and PCC1; the whole complex dimerizes. Requires a divalent metal cation as cofactor.

It localises to the cytoplasm. Its subcellular location is the nucleus. The enzyme catalyses L-threonylcarbamoyladenylate + adenosine(37) in tRNA = N(6)-L-threonylcarbamoyladenosine(37) in tRNA + AMP + H(+). In terms of biological role, component of the EKC/KEOPS complex that is required for the formation of a threonylcarbamoyl group on adenosine at position 37 (t(6)A37) in tRNAs that read codons beginning with adenine. The complex is probably involved in the transfer of the threonylcarbamoyl moiety of threonylcarbamoyl-AMP (TC-AMP) to the N6 group of A37. KAE1 likely plays a direct catalytic role in this reaction, but requires other protein(s) of the complex to fulfill this activity. The EKC/KEOPS complex also promotes both telomere uncapping and telomere elongation. The complex is required for efficient recruitment of transcriptional coactivators. The protein is tRNA N6-adenosine threonylcarbamoyltransferase of Chaetomium globosum (strain ATCC 6205 / CBS 148.51 / DSM 1962 / NBRC 6347 / NRRL 1970) (Soil fungus).